The chain runs to 463 residues: Perilipin-5 (463 aa).

An interaction with LIPE region spans residues 1–108; it reads MSEEEAAQIP…KLEEKLPFLQ (108 aa). Residues 1–173 are essential for lipid droplet targeting; it reads MSEEEAAQIP…HFLPMTEEEL (173 aa). S2, S148, and S322 each carry phosphoserine. The interval 185-463 is interaction with PNPLA2 and ABHD5; that stretch reads VGSVEDQRRQ…KHTLMPELDF (279 aa). The recruits mitochondria at the lipid droplet surface stretch occupies residues 444–463; that stretch reads QEPETPSCPVKHTLMPELDF.

It belongs to the perilipin family. Homooligomer. Interacts with PNPLA2; prevents interaction of PNPLA2 with ABHD5. Interacts with ABHD5; targets ABHD5 to lipid droplets and promotes interaction of ABHD5 with PNPLA2. Interacts with LIPE. Post-translationally, phosphorylated by PKA. Phosphorylated on serine in skeletal muscle at rest or upon lipolytic stimulation. Expressed in skeletal muscle, liver, heart and kidney.

The protein resides in the lipid droplet. It is found in the cytoplasm. It localises to the mitochondrion. Functionally, lipid droplet-associated protein that maintains the balance between lipogenesis and lipolysis and also regulates fatty acid oxidation in oxidative tissues. Recruits mitochondria to the surface of lipid droplets and is involved in lipid droplet homeostasis by regulating both the storage of fatty acids in the form of triglycerides and the release of fatty acids for mitochondrial fatty acid oxidation. In lipid droplet triacylglycerol hydrolysis, plays a role as a scaffolding protein for three major key lipolytic players: ABHD5, PNPLA2 and LIPE. Reduces the triacylglycerol hydrolase activity of PNPLA2 by recruiting and sequestering PNPLA2 to lipid droplets. Phosphorylation by PKA enables lipolysis probably by promoting release of ABHD5 from the perilipin scaffold and by facilitating interaction of ABHD5 with PNPLA2. Also increases lipolysis through interaction with LIPE and upon PKA-mediated phosphorylation of LIPE. In Homo sapiens (Human), this protein is Perilipin-5 (PLIN5).